Consider the following 62-residue polypeptide: Short neurotoxin 1 (62 aa).

Residues 1-20 (LECHNQQSSEPPTTTRCSGG) are disordered. Intrachain disulfides connect Cys3-Cys24, Cys17-Cys41, Cys43-Cys54, and Cys55-Cys60.

The protein belongs to the three-finger toxin family. Short-chain subfamily. Type I alpha-neurotoxin sub-subfamily. In terms of tissue distribution, expressed by the venom gland.

The protein localises to the secreted. In terms of biological role, binds to muscle nicotinic acetylcholine receptor (nAChR) and inhibit acetylcholine from binding to the receptor, thereby impairing neuromuscular transmission. In Naja mossambica (Mozambique spitting cobra), this protein is Short neurotoxin 1.